The sequence spans 87 residues: Cell division topological specificity factor (87 aa).

It belongs to the MinE family.

In terms of biological role, prevents the cell division inhibition by proteins MinC and MinD at internal division sites while permitting inhibition at polar sites. This ensures cell division at the proper site by restricting the formation of a division septum at the midpoint of the long axis of the cell. The polypeptide is Cell division topological specificity factor (Rhizobium meliloti (strain 1021) (Ensifer meliloti)).